We begin with the raw amino-acid sequence, 174 residues long: Small ribosomal subunit protein uS5 (174 aa).

The S5 DRBM domain occupies 18 to 81; sequence WQERVIQIRR…ADGKKHLIDI (64 aa).

It belongs to the universal ribosomal protein uS5 family. As to quaternary structure, part of the 30S ribosomal subunit. Contacts proteins S4 and S8.

Functionally, with S4 and S12 plays an important role in translational accuracy. Located at the back of the 30S subunit body where it stabilizes the conformation of the head with respect to the body. The sequence is that of Small ribosomal subunit protein uS5 from Trichormus variabilis (strain ATCC 29413 / PCC 7937) (Anabaena variabilis).